The chain runs to 647 residues: Serine/threonine-protein kinase PLK3 (647 aa).

The tract at residues Met1–Pro56 is disordered. The segment covering Ser20–Ser31 has biased composition (pro residues). In terms of domain architecture, Protein kinase spans Tyr62–Phe314. Residues Leu68–Cys76 and Lys91 contribute to the ATP site. Asp185 functions as the Proton acceptor in the catalytic mechanism. POLO box domains follow at residues Trp464 to Gln542 and Leu563 to Pro646.

The protein belongs to the protein kinase superfamily. Ser/Thr protein kinase family. CDC5/Polo subfamily. In terms of assembly, interacts with GOLGB1. Interacts (via the POLO-box domain) with CIB1; leading to inhibit PLK3 kinase activity. Phosphorylated in an ATM-dependent manner following DNA damage. Phosphorylated as cells enter mitosis and dephosphorylated as cells exit mitosis. As to expression, constitutively expressed in post-mitotic neurons.

It is found in the cell projection. The protein resides in the dendrite. Its subcellular location is the cytoplasm. It localises to the nucleus. The protein localises to the nucleolus. It is found in the golgi apparatus. The protein resides in the cytoskeleton. Its subcellular location is the microtubule organizing center. It localises to the centrosome. It catalyses the reaction L-seryl-[protein] + ATP = O-phospho-L-seryl-[protein] + ADP + H(+). The catalysed reaction is L-threonyl-[protein] + ATP = O-phospho-L-threonyl-[protein] + ADP + H(+). Functionally, serine/threonine-protein kinase involved in cell cycle regulation, response to stress and Golgi disassembly. Polo-like kinases act by binding and phosphorylating proteins that are already phosphorylated on a specific motif recognized by the POLO box domains. Phosphorylates ATF2, BCL2L1, CDC25A, CDC25C, CHEK2, HIF1A, JUN, p53/TP53, p73/TP73, PTEN, TOP2A and VRK1. Involved in cell cycle regulation: required for entry into S phase and cytokinesis. Phosphorylates BCL2L1, leading to regulate the G2 checkpoint and progression to cytokinesis during mitosis. Plays a key role in response to stress: rapidly activated upon stress stimulation, such as ionizing radiation, reactive oxygen species (ROS), hyperosmotic stress, UV irradiation and hypoxia. Involved in DNA damage response and G1/S transition checkpoint by phosphorylating CDC25A, p53/TP53 and p73/TP73. Phosphorylates p53/TP53 in response to reactive oxygen species (ROS), thereby promoting p53/TP53-mediated apoptosis. Phosphorylates CHEK2 in response to DNA damage, promoting the G2/M transition checkpoint. Phosphorylates the transcription factor p73/TP73 in response to DNA damage, leading to inhibit p73/TP73-mediated transcriptional activation and pro-apoptotic functions. Phosphorylates HIF1A and JUN is response to hypoxia. Phosphorylates ATF2 following hyperosmotic stress in corneal epithelium. Also involved in Golgi disassembly during the cell cycle: part of a MEK1/MAP2K1-dependent pathway that induces Golgi fragmentation during mitosis by mediating phosphorylation of VRK1. May participate in endomitotic cell cycle, a form of mitosis in which both karyokinesis and cytokinesis are interrupted and is a hallmark of megakaryocyte differentiation, via its interaction with CIB1. This Rattus norvegicus (Rat) protein is Serine/threonine-protein kinase PLK3 (Plk3).